Reading from the N-terminus, the 953-residue chain is Probable LRR receptor-like serine/threonine-protein kinase At1g53420 (953 aa).

A signal peptide spans 1-22 (MSLNRFLFTSFSFFLFFIVHFA). Residues 23–566 (SSATLPTQEG…SPRNGMSTGT (544 aa)) are Extracellular-facing. LRR repeat units follow at residues 63-86 (WSTI…LVGL), 88-110 (LLQE…WGVL), 111-132 (PLVN…EFGN), 135-158 (TLTS…GNLP), 159-182 (NIQQ…AKLT), and 183-205 (TLRD…IQKW). Residues Asn-100 and Asn-132 are each glycosylated (N-linked (GlcNAc...) asparagine). 5 N-linked (GlcNAc...) asparagine glycosylation sites follow: Asn-265, Asn-315, Asn-335, Asn-378, and Asn-423. A helical transmembrane segment spans residues 567 to 587 (LHTLVVILSIFIVFLVFGTLW). The Cytoplasmic segment spans residues 588–953 (KKGYLRSKSQ…SDRSESSADH (366 aa)). Residues 624 to 901 (FDSANRIGEG…VKMLEGKKMV (278 aa)) enclose the Protein kinase domain. ATP is bound by residues 630–638 (IGEGGFGPV) and Lys-652. Tyr-697 bears the Phosphotyrosine mark. Asp-750 functions as the Proton acceptor in the catalytic mechanism. Position 783 is a phosphoserine (Ser-783). Phosphothreonine is present on residues Thr-784 and Thr-789. The residue at position 797 (Tyr-797) is a Phosphotyrosine.

The protein belongs to the protein kinase superfamily. Ser/Thr protein kinase family.

Its subcellular location is the membrane. The catalysed reaction is L-seryl-[protein] + ATP = O-phospho-L-seryl-[protein] + ADP + H(+). It catalyses the reaction L-threonyl-[protein] + ATP = O-phospho-L-threonyl-[protein] + ADP + H(+). The polypeptide is Probable LRR receptor-like serine/threonine-protein kinase At1g53420 (Arabidopsis thaliana (Mouse-ear cress)).